The chain runs to 179 residues: Large ribosomal subunit protein uL6 (179 aa).

The protein belongs to the universal ribosomal protein uL6 family. In terms of assembly, part of the 50S ribosomal subunit.

Its function is as follows. This protein binds to the 23S rRNA, and is important in its secondary structure. It is located near the subunit interface in the base of the L7/L12 stalk, and near the tRNA binding site of the peptidyltransferase center. This chain is Large ribosomal subunit protein uL6, found in Crocosphaera subtropica (strain ATCC 51142 / BH68) (Cyanothece sp. (strain ATCC 51142)).